Consider the following 532-residue polypeptide: Cytokinin dehydrogenase 8 (532 aa).

Positions 1 to 26 are cleaved as a signal peptide; that stretch reads MELKAMYLYAAVLAVLLCSSVNFIQS. Positions 51 to 238 constitute an FAD-binding PCMH-type domain; the sequence is VSDAPFAVMR…TRARIPLQLA (188 aa). Residues Ala87, Gly89, and Gly91 each coordinate FAD. Pros-8alpha-FAD histidine is present on His92. FAD is bound by residues Ser93, Gln97, Asp162, Thr167, Ser173, Ile177, and Ile228. Asn420 is a glycosylation site (N-linked (GlcNAc...) asparagine). Positions 482 and 520 each coordinate FAD.

The protein belongs to the oxygen-dependent FAD-linked oxidoreductase family. In terms of assembly, monomer. FAD serves as cofactor.

It localises to the secreted. It is found in the extracellular space. It catalyses the reaction N(6)-dimethylallyladenine + A + H2O = 3-methyl-2-butenal + adenine + AH2. In terms of biological role, catalyzes the oxidation of cytokinins, a family of N(6)-substituted adenine derivatives that are plant hormones, where the substituent is an isopentenyl group. This chain is Cytokinin dehydrogenase 8 (CKX8), found in Oryza sativa subsp. indica (Rice).